Here is a 393-residue protein sequence, read N- to C-terminus: Probable WRKY transcription factor 25 (393 aa).

The WRKY 1 DNA-binding region spans 160–224 (MVSRNSNDGY…YKGGHNHPKP (65 aa)). Positions 191, 196, 219, and 221 each coordinate Zn(2+). Disordered stretches follow at residues 217-242 (GGHNHPKPEFTKRPSQSSLPSSVNGR) and 277-303 (SEYGEIDEEEEQPEMKRMKREGEDEGM). Polar residues predominate over residues 229–240 (RPSQSSLPSSVN). Basic and acidic residues predominate over residues 289–298 (PEMKRMKREG). A DNA-binding region (WRKY 2) is located at residues 322-387 (SDIDVLIDGF…YEGRHNHDIP (66 aa)). Cysteine 353, cysteine 358, histidine 382, and histidine 384 together coordinate Zn(2+).

This sequence belongs to the WRKY group I family. Interacts with MKS1. Interacts with SIB1. Interacts with VQ10 and CAMBP25/VQ15. Post-translationally, phosphorylated by MPK4. In terms of tissue distribution, highly expressed in roots and at lower levels in leaves, stems and seeds.

The protein resides in the nucleus. Transcription factor. Interacts specifically with the W box (5'-(T)TGAC[CT]-3'), a frequently occurring elicitor-responsive cis-acting element. Functions with WRKY33 as positive regulator of salt stress response and abscisic acid (ABA) signaling. Plays a partial role in heat stress tolerance. Functions with WRKY26 and WRKY33 as positive regulator of plant thermotolerance by partially participating in ethylene-response signal transduction pathway. This chain is Probable WRKY transcription factor 25 (WRKY25), found in Arabidopsis thaliana (Mouse-ear cress).